The sequence spans 445 residues: Peptide chain release factor 1, mitochondrial (445 aa).

The N-terminal 61 residues, 1–61 (MNRHLCVWLF…LLSKNWSRRY (61 aa)), are a transit peptide targeting the mitochondrion. Residues 297-361 (PKDLRIDTFR…LRARLYQQII (65 aa)) are GGQ domain. Residues 311–313 (GGQ) carry the GGQ motif. An N5-methylglutamine modification is found at glutamine 313.

Belongs to the prokaryotic/mitochondrial release factor family. In terms of processing, methylation of glutamine in the GGQ triplet by HEMK1 is conserved from bacteria to mammals.

It localises to the mitochondrion. Mitochondrial peptide chain release factor that directs the termination of translation in response to the peptide chain non-canonical stop codons AGG and AGA. Non-canonical termination codons AGG and AGA are found at the end of MT-CO1/COX1 and MT-ND6/ND6 open reading frames, respectively. Recognizes non-canonical stop codons via a network of interactions between the codon, MTRF1 and the ribosomal RNA (rRNA): in contrast to other translation release factors, which identify the codon in the A-site via direct interactions of amino acid side chains with the bases, MTRF1 repositions the first 2 bases of the stop codon to use an intricate network of interactions that includes residues of the release factor, the rRNA of the small ribosomal subunit, as well as neighboring bases of the mRNA. The chain is Peptide chain release factor 1, mitochondrial from Homo sapiens (Human).